We begin with the raw amino-acid sequence, 398 residues long: Serine/threonine-protein phosphatase 4 regulatory subunit 2-B (398 aa).

Residues 138-398 (SSEKNTSPSL…NAPEEPMEQD (261 aa)) are disordered. 3 stretches are compositionally biased toward polar residues: residues 139–149 (SEKNTSPSLNR), 156–170 (PSNS…NVNG), and 183–193 (TLSSPMNTNGL). Residues 197–211 (MENKESDLQQKEKSL) show a composition bias toward basic and acidic residues. Residues 278–294 (ASTSADKGKESCQTAQT) show a composition bias toward polar residues. Low complexity predominate over residues 338–366 (SESACSLNSEEPNSAAAAASTAGTDSSEG).

It belongs to the PPP4R2 family. As to quaternary structure, serine/threonine-protein phosphatase 4 (PP4) occurs in different assemblies of the catalytic and one or more regulatory subunits.

Regulatory subunit of serine/threonine-protein phosphatase 4 (PP4). The polypeptide is Serine/threonine-protein phosphatase 4 regulatory subunit 2-B (ppp4r2-b) (Xenopus laevis (African clawed frog)).